The chain runs to 586 residues: 3-hydroxy-3-methylglutaryl-coenzyme A reductase 3 (586 aa).

2 helical membrane passes run 36–59 and 87–107; these read PSDY…FFSV and ALIC…IGFV. Residues 108–170 form a linker region; it reads HSFSRASTDS…STTTTSTLSD (63 aa). Catalytic regions lie at residues 171–586 and 172–586; these read DDEQ…KITF and DEQI…KITF. Catalysis depends on charge relay system residues Glu265, Lys397, and Asp473. His571 serves as the catalytic Proton donor. An N-linked (GlcNAc...) asparagine glycan is attached at Asn575.

The protein belongs to the HMG-CoA reductase family.

The protein localises to the endoplasmic reticulum membrane. It localises to the mitochondrion membrane. The protein resides in the plastid membrane. It carries out the reaction (R)-mevalonate + 2 NADP(+) + CoA = (3S)-3-hydroxy-3-methylglutaryl-CoA + 2 NADPH + 2 H(+). It participates in metabolic intermediate biosynthesis; (R)-mevalonate biosynthesis; (R)-mevalonate from acetyl-CoA: step 3/3. Catalyzes the synthesis of mevalonate. The specific precursor of all isoprenoid compounds present in plants. The chain is 3-hydroxy-3-methylglutaryl-coenzyme A reductase 3 (HMGR3) from Hevea brasiliensis (Para rubber tree).